Reading from the N-terminus, the 445-residue chain is Enolase 2 (445 aa).

The substrate site is built by His164 and Glu173. Glu216 acts as the Proton donor in catalysis. Asp251, Glu301, and Asp328 together coordinate Mg(2+). The substrate site is built by Glu301 and Asp328. The Proton acceptor role is filled by Lys353. Residues 380–383 (SHRS) and Lys404 each bind substrate.

It belongs to the enolase family. As to quaternary structure, homodimer. Mg(2+) serves as cofactor.

The protein resides in the cytoplasm. It carries out the reaction (2R)-2-phosphoglycerate = phosphoenolpyruvate + H2O. The protein operates within carbohydrate degradation; glycolysis; pyruvate from D-glyceraldehyde 3-phosphate: step 4/5. The polypeptide is Enolase 2 (ENO2) (Hevea brasiliensis (Para rubber tree)).